We begin with the raw amino-acid sequence, 195 residues long: MRVVLITLFLFIGAAVAEDAGIDAITPEEGKANNIIEAYESPRFQKFVTHCSSHVTQTCSGNDPLNNQEASRMNSPFGLSFCLFDSMEKCLADHKASLKDPQDNNNLASMSSLPGSIQNQPLLIETVKFRTVLKTCSHVSAQYCFTNPNVATSALADCLMPSLNQCVYPGSILLPWPPPPPPPPPPPPPPPPPLI.

A signal peptide spans 1 to 17 (MRVVLITLFLFIGAAVA).

This sequence belongs to the nodulin 20 family.

Its subcellular location is the symbiosome. It localises to the peribacteroid membrane. It is found in the peribacteroid space. This Glycine max (Soybean) protein is Nodulin-20a (NOD20A).